The primary structure comprises 302 residues: F-box protein SKIP19 (302 aa).

The region spanning 16 to 63 (STNWTELPPELTSAILHRLGAIEILENAQKVCRSWRRVCKDPSMWRKI) is the F-box domain.

As to quaternary structure, part of a SCF (ASK-cullin-F-box) protein ligase complex. Interacts with CUL1 and SPK1B/ASK2.

It localises to the nucleus. Its pathway is protein modification; protein ubiquitination. In terms of biological role, component of SCF(ASK-cullin-F-box) E3 ubiquitin ligase complexes, which may mediate the ubiquitination and subsequent proteasomal degradation of target proteins. This chain is F-box protein SKIP19 (SKIP19), found in Arabidopsis thaliana (Mouse-ear cress).